We begin with the raw amino-acid sequence, 211 residues long: Arginine exporter protein ArgO (211 aa).

At 1–38 (MFSYYFQGLALGAAMILPLGPQNAFVMNQGIRRQYHIM) the chain is on the cytoplasmic side. The helical transmembrane segment at 39–58 (IALLCAISDLVLICAGIFGG) threads the bilayer. At 59-63 (SALLM) the chain is on the periplasmic side. A helical membrane pass occupies residues 64 to 91 (QSPWLLALVTWGGVAFLLWYGFGAFKTA). Residues 92–102 (MSSNIELASAE) lie on the Cytoplasmic side of the membrane. A helical membrane pass occupies residues 103-130 (VMKQGRWKIIATMLAVTWLNPHVYLDTF). The Periplasmic portion of the chain corresponds to 131-140 (VVLGSLGGQL). Residues 141–170 (DVEPKRWFALGTISASFLWFFGLALLAAWL) traverse the membrane as a helical segment. Topologically, residues 171–173 (APR) are cytoplasmic. The helical transmembrane segment at 174–200 (LRTAKAQRIINLVVGCVMWFIALQLAR) threads the bilayer. Topologically, residues 201-211 (DGIAHAQALFS) are periplasmic.

Belongs to the LysE/ArgO transporter (TC 2.A.75) family. As to quaternary structure, monomer.

It is found in the cell inner membrane. It carries out the reaction L-arginine(in) = L-arginine(out). Its function is as follows. Involved in the export of arginine. Important to control the intracellular level of arginine and the correct balance between arginine and lysine. May also be involved in the export of canavanine (a plant-derived antimetabolite). The polypeptide is Arginine exporter protein ArgO (Escherichia coli (strain K12)).